The primary structure comprises 639 residues: Kinesin-like protein KIF22 (639 aa).

Residues 18 to 345 (RVRVAVRLRP…LNFAAKSKQI (328 aa)) enclose the Kinesin motor domain. 102–109 (GPTGAGKT) provides a ligand contact to ATP. A disordered region spans residues 358-400 (IAALPAMKRPREEAETAAGSRQRKKSKTDSTESSPNTSMDAAS). The segment covering 388–397 (TESSPNTSMD) has biased composition (polar residues). Positions 439–484 (KRERMALLKKWEESQMEIERLKEKQKELEQKAIEAEARLEKSTNSD) form a coiled coil. Residues 549-552 (GREN) carry the Important for regulated proteolytic degradation motif.

It belongs to the TRAFAC class myosin-kinesin ATPase superfamily. Kinesin family. Post-translationally, ubiquitinated, leading to its subsequent proteasomal degradation.

It is found in the nucleus. The protein localises to the cytoplasm. It localises to the cytoskeleton. Its function is as follows. Kinesin family member that is involved in spindle formation and the movements of chromosomes during mitosis and meiosis. Binds to microtubules and to DNA. In Xenopus tropicalis (Western clawed frog), this protein is Kinesin-like protein KIF22 (kif22).